We begin with the raw amino-acid sequence, 1217 residues long: MIDVNKFESMQIGLASPNKIRSWSYGEVKKPETINYRTLKPEKDGLFDERIFGPTKDWSCACGKYKGVRYRGIVCDRCGVEVTSSKVRRERMGHIELAAPVTHIWYFKGIPSRMGLVLDISPRLLEEVIYFAAYIVIDPGDTDLEPKQLLTEAEYREQKAKYGNRFEAKMGAEAIRELLKKVDLDKEVKNLKKELQTATGQKRTRAIRRLDILDAFKNSGNKPEWMVMDAVPVIPPDLRPMVQLEGGRFATSDLNDLYRRVINRNNRLKRLLDLNAPNIIVQNEKRMLQEAVDALIDNGRRGRPVVGPGNRPLKSLSHMLKGKQGRFRQNLLGKRVDYSGRSVIDVSPKLKFYQCGVPRPMALELFKPFVMHELVKRGIASNIKNAKRKIDREDDDIWDVLEDVIKERPVLLNRAPTLHRLSIQAFEPVLVPGKSIRLHPLACEAYNADFDGDQMAIHVPLSDEAVAESRLLMLAAHHILAPKDGKPIVTPSQDVVLGNYWLTQAERGREGEGMIFSSPAEATVAYENGDIHYHTIIGMSADAMPKKPWPKGHEHGIFITTYGKLVFNQLFPDDYFYVNEPTEKNLNDPLDAKYFLNEGEDINSKINEVADDLIASPFKSSFLSDSIATIYKYYKVQRTSEYLDDLKELGYTSSTTSGITIGMNDVPEIGDKDEKVAKARKQVDVVSKQFRRGLITEQERHDRVISIWNACKDEIQNEIAQIHSPRNPISIMADSGARGNISNFTQLAGMRGLMATPNGGLFEIPVTSNFKEGLSVLELFMSTHGARKGMTDTALKTAQSGYLTRRLVDVAQDVIIRDDDCGTDRGITVSAIMEGDEMIEPLFDRLVGRFTAETVKDPETGEAIVGRDVMMDENMAHKICDAGVTHVKIRSILTCDTPHGVCRKCYGMNLATGEEVEVGEAVGTVAAQSIGEPGTQLTLRTFHNGGVAGAEDITQGLPRVQELFEARNPKGRATISEVDGVIDSIQENPAEHTREITVKGKIDTRSYSVPYTASVAVSEGDYVHRGDKLTLGSVDPKELIQVTDTLTTEKYILAEVQKAYRMQGVDIADKHVEVLTRQMLQKVRVLDPGETDILPGEVMDIGQFRDRNKEVIISGGIPATAQSIILSITKAALETNSFLSAASFQETTRVLTDASIRGKNDPLLGLKENVIIGKIIPAGTGMPIYRSMEPEADVKKPDSVYSIADIEKQMKEKDKTK.

Residues Cys-60, Cys-62, Cys-75, and Cys-78 each coordinate Zn(2+). Asp-449, Asp-451, and Asp-453 together coordinate Mg(2+). Zn(2+) is bound by residues Cys-821, Cys-895, Cys-902, and Cys-905.

Belongs to the RNA polymerase beta' chain family. As to quaternary structure, the RNAP catalytic core consists of 2 alpha, 1 beta, 1 beta' and 1 omega subunit. When a sigma factor is associated with the core the holoenzyme is formed, which can initiate transcription. It depends on Mg(2+) as a cofactor. Zn(2+) serves as cofactor.

It catalyses the reaction RNA(n) + a ribonucleoside 5'-triphosphate = RNA(n+1) + diphosphate. DNA-dependent RNA polymerase catalyzes the transcription of DNA into RNA using the four ribonucleoside triphosphates as substrates. The sequence is that of DNA-directed RNA polymerase subunit beta' from Lactobacillus acidophilus (strain ATCC 700396 / NCK56 / N2 / NCFM).